The sequence spans 358 residues: Dihydroorotate dehydrogenase (quinone) (358 aa).

Residues 61–65 and Gly-85 each bind FMN; that span reads AGFDK. Lys-65 contacts substrate. Residue 110–114 coordinates substrate; it reads NRFGL. FMN-binding residues include Asn-139 and Asn-170. Asn-170 is a binding site for substrate. Catalysis depends on Ser-173, which acts as the Nucleophile. Asn-175 lines the substrate pocket. Residues Lys-211 and Ser-239 each coordinate FMN. Residue 240–241 coordinates substrate; it reads NT. FMN-binding positions include Gly-263, Gly-292, and 313-314; that span reads YS.

This sequence belongs to the dihydroorotate dehydrogenase family. Type 2 subfamily. Monomer. Requires FMN as cofactor.

It is found in the cell membrane. It catalyses the reaction (S)-dihydroorotate + a quinone = orotate + a quinol. It functions in the pathway pyrimidine metabolism; UMP biosynthesis via de novo pathway; orotate from (S)-dihydroorotate (quinone route): step 1/1. Catalyzes the conversion of dihydroorotate to orotate with quinone as electron acceptor. This Methylorubrum extorquens (strain CM4 / NCIMB 13688) (Methylobacterium extorquens) protein is Dihydroorotate dehydrogenase (quinone).